Consider the following 278-residue polypeptide: Octanoyl-[GcvH]:protein N-octanoyltransferase (278 aa).

The BPL/LPL catalytic domain maps to 44–249 (SQSPPTLRAW…TLQQHGASLL (206 aa)). Residue Cys148 is the Acyl-thioester intermediate of the active site.

Belongs to the octanoyltransferase LipL family.

The catalysed reaction is N(6)-octanoyl-L-lysyl-[glycine-cleavage complex H protein] + L-lysyl-[lipoyl-carrier protein] = N(6)-octanoyl-L-lysyl-[lipoyl-carrier protein] + L-lysyl-[glycine-cleavage complex H protein]. The protein operates within protein modification; protein lipoylation via endogenous pathway; protein N(6)-(lipoyl)lysine from octanoyl-[acyl-carrier-protein]. Functionally, catalyzes the amidotransfer (transamidation) of the octanoyl moiety from octanoyl-GcvH to the lipoyl domain of the E2 subunit of lipoate-dependent enzymes. The chain is Octanoyl-[GcvH]:protein N-octanoyltransferase from Halalkalibacterium halodurans (strain ATCC BAA-125 / DSM 18197 / FERM 7344 / JCM 9153 / C-125) (Bacillus halodurans).